The sequence spans 234 residues: Sugar fermentation stimulation protein homolog (234 aa).

The protein belongs to the SfsA family.

The chain is Sugar fermentation stimulation protein homolog from Photobacterium profundum (strain SS9).